The chain runs to 316 residues: Porphobilinogen deaminase (316 aa).

Position 249 is an S-(dipyrrolylmethanemethyl)cysteine (Cys249).

This sequence belongs to the HMBS family. Monomer. Dipyrromethane is required as a cofactor.

It catalyses the reaction 4 porphobilinogen + H2O = hydroxymethylbilane + 4 NH4(+). It functions in the pathway porphyrin-containing compound metabolism; protoporphyrin-IX biosynthesis; coproporphyrinogen-III from 5-aminolevulinate: step 2/4. Its function is as follows. Tetrapolymerization of the monopyrrole PBG into the hydroxymethylbilane pre-uroporphyrinogen in several discrete steps. The polypeptide is Porphobilinogen deaminase (Nitrobacter hamburgensis (strain DSM 10229 / NCIMB 13809 / X14)).